The sequence spans 249 residues: 5'-nucleotidase SurE (249 aa).

Residues Asp8, Asp9, Ser39, and Asn91 each contribute to the a divalent metal cation site.

Belongs to the SurE nucleotidase family. A divalent metal cation serves as cofactor.

The protein localises to the cytoplasm. It carries out the reaction a ribonucleoside 5'-phosphate + H2O = a ribonucleoside + phosphate. In terms of biological role, nucleotidase that shows phosphatase activity on nucleoside 5'-monophosphates. The sequence is that of 5'-nucleotidase SurE from Pseudomonas putida (strain ATCC 47054 / DSM 6125 / CFBP 8728 / NCIMB 11950 / KT2440).